The primary structure comprises 123 residues: Thioredoxin H-type (123 aa).

Residues 2 to 119 enclose the Thioredoxin domain; sequence AATAELIPAG…IEAKLLKHSQ (118 aa). Cys-45 and Cys-48 are oxidised to a cystine.

This sequence belongs to the thioredoxin family. Plant H-type subfamily.

It is found in the cytoplasm. In terms of biological role, participates in various redox reactions through the reversible oxidation of the active center dithiol to a disulfide. The H form is known to activate a number of cytosolic enzymes. The protein is Thioredoxin H-type (PEC-2) of Brassica campestris (Field mustard).